The sequence spans 81 residues: Small ribosomal subunit protein bS18A (81 aa).

Belongs to the bacterial ribosomal protein bS18 family. Part of the 30S ribosomal subunit. Forms a tight heterodimer with protein bS6.

Its function is as follows. Binds as a heterodimer with protein bS6 to the central domain of the 16S rRNA, where it helps stabilize the platform of the 30S subunit. In Saccharopolyspora erythraea (strain ATCC 11635 / DSM 40517 / JCM 4748 / NBRC 13426 / NCIMB 8594 / NRRL 2338), this protein is Small ribosomal subunit protein bS18A.